The sequence spans 439 residues: ATP-dependent RNA helicase RhlB (439 aa).

Positions 9-37 (QKFADLPLHPEVKQALAENGFEFCTPIQA) match the Q motif motif. The Helicase ATP-binding domain maps to 40–219 (LPVLLQSKDI…YDHMNEPVKV (180 aa)). An ATP-binding site is contributed by 53 to 60 (AQTGTGKT). The short motif at 165 to 168 (DEAD) is the DEAD box element. Residues 243-390 (KMRLLLTLIE…VSNYDRDALL (148 aa)) form the Helicase C-terminal domain. Residues 395-439 (PPVKIHRRHPAGARNLRERSGAGRPQGAHRSGGRPPRHDRTRRQP) are disordered. Residues 425 to 439 (SGGRPPRHDRTRRQP) are compositionally biased toward basic residues.

This sequence belongs to the DEAD box helicase family. RhlB subfamily. In terms of assembly, component of the RNA degradosome, which is a multiprotein complex involved in RNA processing and mRNA degradation.

Its subcellular location is the cytoplasm. The enzyme catalyses ATP + H2O = ADP + phosphate + H(+). Its function is as follows. DEAD-box RNA helicase involved in RNA degradation. Has RNA-dependent ATPase activity and unwinds double-stranded RNA. This is ATP-dependent RNA helicase RhlB from Shewanella sp. (strain ANA-3).